A 227-amino-acid chain; its full sequence is Cytidylate kinase (227 aa).

12-20 provides a ligand contact to ATP; that stretch reads GPSGAGKGT.

The protein belongs to the cytidylate kinase family. Type 1 subfamily.

It localises to the cytoplasm. It catalyses the reaction CMP + ATP = CDP + ADP. It carries out the reaction dCMP + ATP = dCDP + ADP. The chain is Cytidylate kinase from Salmonella choleraesuis (strain SC-B67).